The following is a 324-amino-acid chain: Heat-inducible transcription repressor HrcA (324 aa).

This sequence belongs to the HrcA family.

Functionally, negative regulator of class I heat shock genes (grpE-dnaK-dnaJ and groELS operons). Prevents heat-shock induction of these operons. The protein is Heat-inducible transcription repressor HrcA of Parasynechococcus marenigrum (strain WH8102).